The primary structure comprises 869 residues: MAHLKINGLVQIRSTNRSKHTRASQWKEAVIEIVERKQKVNLVVSFKLEERRRVFQLGDNVTGVVVSGELGLYHLDLTLRDDTSLLIDKLSSADVEHLKSFLDSSTPCESQQPMEPMSSQDDLESSDPFCGEHQEAACGSLNTTPESGTPLSRKMPLSMSNTTGGQKRGEKQGRKRKTEPSSSSAEVNKDIPKENTPDQKKKSRRYYSRNRGGKAEKAVTLREQEKRSNWKLEPAFNSKSYGRANLDGTILPIATCSDDRDVSIFGLEIITHNGVQSLPDPYLNQLKREGFPNLGNTCYMNSILQSVFGIPTFAKDLLTQGIPWEKVSYDDLIMPLSQLLVLKDIRDVEIKGELLTSVKKSISTVADTFSGNEQNDAHEFLSLCLDQLKLNMEKVNAMWDTERRNTCAGSAGTKRFVCPVGANFEFELHSSIICEGCGEATIKTEVSNYLSIDLHHGTKTHPLSIQKSFDLFFTPEKIEHNCEKCKNKNSVLKYTLRRLPRVLIVHLKRYQVTTDLLPVKSEQPVEISKYLNISSHCHENRKLPFPLANTSPDVSQGMMPGIFNQSMLSKKVISESCDPMVLQVGSSVDAEIQSFQIMYEDEDASEEQQQRGLESGSMLEPELVKTENRILRQKTSLATDSMMGDGYSFLPMLCEPLSIQDPGLAEMGLQEVPENPEFKNYEKINIYGKSDGRTNTELSKLYQNHGSRIKGLFLPASLASVSSQEDPEKDLSRSPELQEDDPHSFAFGSDDSKDGEMGDDLQNYRLVSVVSHFGSSPNSGHYVSDVYDFQKQAWLLYSDVQVFESSDPSIQENRLNSGYIFFYMHNEIFEELLKKASECKVLSTSKEEKRDIDYFSTLLNGLTYILEEF.

2 stretches are compositionally biased toward polar residues: residues 104–120 (SSTP…MSSQ) and 140–150 (SLNTTPESGTP). Residues 104 to 226 (SSTPCESQQP…KAVTLREQEK (123 aa)) form a disordered region. Positions 187 to 200 (VNKDIPKENTPDQK) are enriched in basic and acidic residues. Residues 201 to 212 (KKSRRYYSRNRG) are compositionally biased toward basic residues. The span at 213–226 (GKAEKAVTLREQEK) shows a compositional bias: basic and acidic residues. Residues 289–826 (EGFPNLGNTC…SGYIFFYMHN (538 aa)) enclose the USP domain. The active-site Nucleophile is C298. A disordered region spans residues 723–754 (SQEDPEKDLSRSPELQEDDPHSFAFGSDDSKD). Catalysis depends on H781, which acts as the Proton acceptor.

Belongs to the peptidase C19 family. In terms of tissue distribution, predominantly expressed in brain and testis. Highest expression levels in adult brain, especially in the cerebral cortex and hippocampus, and in the forebrain, face, and limb buds of midgestation mouse embryos.

It localises to the cytoplasm. Its subcellular location is the perinuclear region. The catalysed reaction is Thiol-dependent hydrolysis of ester, thioester, amide, peptide and isopeptide bonds formed by the C-terminal Gly of ubiquitin (a 76-residue protein attached to proteins as an intracellular targeting signal).. In terms of biological role, deubiquitinase involved in innate antiviral immunity by mediating 'Lys-48'-linked deubiquitination of CGAS, thereby promoting its stabilization. The polypeptide is Ubiquitin carboxyl-terminal hydrolase 29 (Mus musculus (Mouse)).